A 57-amino-acid polypeptide reads, in one-letter code: UPF0391 membrane protein Atu4467 (57 aa).

Transmembrane regions (helical) follow at residues 4 to 24 (WALI…TGIS) and 33 to 53 (ILFF…LMAG).

It belongs to the UPF0391 family.

Its subcellular location is the cell membrane. In Agrobacterium fabrum (strain C58 / ATCC 33970) (Agrobacterium tumefaciens (strain C58)), this protein is UPF0391 membrane protein Atu4467.